A 632-amino-acid chain; its full sequence is tRNA uridine 5-carboxymethylaminomethyl modification enzyme MnmG (632 aa).

FAD is bound by residues 15 to 20 (GAGHAG), Ile127, and Ser182. Residue 276 to 290 (GPRYCPSIEDKIVRF) coordinates NAD(+). Gln373 is a binding site for FAD.

This sequence belongs to the MnmG family. Homodimer. Heterotetramer of two MnmE and two MnmG subunits. It depends on FAD as a cofactor.

The protein localises to the cytoplasm. Functionally, NAD-binding protein involved in the addition of a carboxymethylaminomethyl (cmnm) group at the wobble position (U34) of certain tRNAs, forming tRNA-cmnm(5)s(2)U34. The protein is tRNA uridine 5-carboxymethylaminomethyl modification enzyme MnmG of Streptococcus pyogenes serotype M1.